The sequence spans 676 residues: Envelope glycoprotein (676 aa).

Positions Met1 to Ser32 are cleaved as a signal peptide. The Extracellular segment spans residues Met33 to Gln650. Residue Asn40 is glycosylated (N-linked (GlcNAc...) asparagine; by host). 5 cysteine pairs are disulfide-bonded: Cys53/Cys609, Cys108/Cys135, Cys121/Cys147, Cys511/Cys556, and Cys601/Cys608. The tract at residues Lys54 to Glu201 is receptor-binding. Asn204, Asn208, Asn238, Asn257, Asn268, Asn296, and Asn314 each carry an N-linked (GlcNAc...) asparagine; by host glycan. Residues Glu305 to Thr485 form a mucin-like region region. The interval Leu313–Val351 is disordered. Basic and acidic residues predominate over residues Arg330–Pro344. N-linked (GlcNAc...) asparagine; by host glycosylation is present at Asn366. Positions Ser406–Leu458 are disordered. Composition is skewed to polar residues over residues Pro415–Thr430 and Thr438–Leu458. Asn463 carries an N-linked (GlcNAc...) asparagine; by host glycan. A fusion peptide region spans residues His524–Ala539. Residues Leu554–Arg595 are a coiled coil. N-linked (GlcNAc...) asparagine; by host glycosylation occurs at Asn563. Positions Trp615–Pro634 form a coiled coil. Residue Asn618 is glycosylated (N-linked (GlcNAc...) asparagine; by host). Residues Trp651 to Val671 form a helical membrane-spanning segment. Residues Cys670 and Cys672 are each lipidated (S-palmitoyl cysteine; by host). Over Cys672–Cys676 the chain is Cytoplasmic.

This sequence belongs to the filoviruses glycoprotein family. Homotrimer; each monomer consists of a GP1 and a GP2 subunit linked by disulfide bonds. The resulting peplomers (GP1,2) protrude from the virus surface as spikes. Interacts with host integrin alpha-V/ITGAV. Interacts with host CLEC10A. Binds also to host CD209 and CLEC4M/DC-SIGN(R). Interacts with host FOLR1. Interacts with BST2; this interaction inhibits the antiviral effect of BST2 and this allows viral release from infected cells. Interacts with host FCN1; this interaction enhances viral entry. Interacts with host TLR4; this interaction induces cell death in T-lymphocytes or proinflammatory cytokines and SOCS1 production in monocytes. In terms of assembly, interacts with host entry receptor NPC1. As to quaternary structure, GP1 and GP2delta are part of GP1,2delta soluble complexes released by ectodomain shedding. In terms of processing, the signal peptide region modulates GP's high mannose glycosylation, thereby determining the efficiency of the interactions with DC-SIGN(R). Post-translationally, N-glycosylated. O-glycosylated in the mucin-like region. In terms of processing, palmitoylation of GP2 is not required for its function. Post-translationally, specific enzymatic cleavages in vivo yield mature proteins. The precursor is processed into GP1 and GP2 by host cell furin in the trans Golgi, and maybe by other host proteases, to yield the mature GP1 and GP2 proteins. The cleavage site corresponds to the furin optimal cleavage sequence [KR]-X-[KR]-R. This cleavage does not seem to be required for function. After the internalization of the virus into cell endosomes, GP1 C-terminus is removed by the endosomal proteases cathepsin B, cathepsin L, or both, leaving a 19-kDa N-terminal fragment which is further digested by cathepsin B. Proteolytic processing of GP1,2 by host ADAM17 can remove the transmembrane anchor of GP2 and leads to shedding of complexes consisting in GP1 and truncated GP2 (GP1,2delta).

The protein resides in the virion membrane. Its subcellular location is the host cell membrane. It localises to the secreted. Its function is as follows. Trimeric GP1,2 complexes form the virion surface spikes and mediate the viral entry processes, with GP1 acting as the receptor-binding subunit and GP2 as the membrane fusion subunit. At later times of infection, down-regulates the expression of various host cell surface molecules that are essential for immune surveillance and cell adhesion. Down-modulates several integrins including ITGA1, ITGA2, ITGA3, ITGA4, ITGA5, ITGA6, ITGAV and ITGB1. This decrease in cell adhesion molecules may lead to cell detachment, contributing to the disruption of blood vessel integrity and hemorrhages developed during infection (cytotoxicity). Interacts with host TLR4 and thereby stimulates the differentiation and activation of monocytes leading to bystander death of T-lymphocytes. Down-regulates as well the function of host natural killer cells. Counteracts the antiviral effect of host BST2/tetherin that restricts release of progeny virions from infected cells. However, cooperates with VP40 and host BST2 to activate canonical NF-kappa-B pathway in a manner dependent on neddylation. Functionally, functions as a decoy for anti-GP1,2 antibodies thereby contributing to viral immune evasion. Interacts and activates host macrophages and dendritic cells inducing up-regulation of cytokine transcription. This effect is mediated throught activation of host TLR4. Responsible for binding to the receptor(s) on target cells. Interacts with CD209/DC-SIGN and CLEC4M/DC-SIGNR which act as cofactors for virus entry into dendritic cells (DCs) and endothelial cells. Binding to the macrophage specific lectin CLEC10A also seem to enhance virus infectivity. Interaction with FOLR1/folate receptor alpha may be a cofactor for virus entry in some cell types, although results are contradictory. Members of the Tyro3 receptor tyrosine kinase family also seem to be cell entry factors in filovirus infection. Once attached, the virions are internalized through clathrin-dependent endocytosis and/or macropinocytosis. After internalization of the virus into the endosomes of the host cell, proteolysis of GP1 by two cysteine proteases, CTSB/cathepsin B and CTSL/cathepsin L removes the glycan cap and allows GP1 binding to the host entry receptor NPC1. NPC1-binding, Ca(2+) and acidic pH induce a conformational change of GP2, which unmasks its fusion peptide and permit membranes fusion. In terms of biological role, acts as a class I viral fusion protein. Under the current model, the protein has at least 3 conformational states: pre-fusion native state, pre-hairpin intermediate state, and post-fusion hairpin state. During viral and target cell membrane fusion, the coiled coil regions (heptad repeats) assume a trimer-of-hairpins structure, positioning the fusion peptide in close proximity to the C-terminal region of the ectodomain. The formation of this structure appears to drive apposition and subsequent fusion of viral and target cell membranes. Responsible for penetration of the virus into the cell cytoplasm by mediating the fusion of the membrane of the endocytosed virus particle with the endosomal membrane. Low pH in endosomes induces an irreversible conformational change in GP2, releasing the fusion hydrophobic peptide. In Epomops franqueti (Franquet's epauletted fruit bat), this protein is Envelope glycoprotein (GP).